The following is a 91-amino-acid chain: Small ribosomal subunit protein uS15c (91 aa).

This sequence belongs to the universal ribosomal protein uS15 family. In terms of assembly, part of the 30S ribosomal subunit.

The protein resides in the plastid. The protein localises to the chloroplast. This chain is Small ribosomal subunit protein uS15c (rps15), found in Ceratophyllum demersum (Rigid hornwort).